Here is a 235-residue protein sequence, read N- to C-terminus: Probable 2-phosphosulfolactate phosphatase (235 aa).

The protein belongs to the ComB family. Mg(2+) serves as cofactor.

It carries out the reaction (2R)-O-phospho-3-sulfolactate + H2O = (2R)-3-sulfolactate + phosphate. This is Probable 2-phosphosulfolactate phosphatase from Clostridium novyi (strain NT).